The following is a 463-amino-acid chain: Probable mannan endo-1,4-beta-mannosidase F (463 aa).

The first 18 residues, 1-18 (MRSLSSIALLSVVGAASA), serve as a signal peptide directing secretion. A CBM1 domain is found at 19–54 (QAGPWAQCGGKSFSGSSECASGWKCQELNEWFSQCV). The interval 57–78 (AESTTPTVSSTPTPTDAPSVSI) is disordered. Positions 59–77 (STTPTVSSTPTPTDAPSVS) are enriched in low complexity. A ser-rich linker region spans residues 75–118 (SVSITASVTTGINKSISVSSASKSTPLPSSSSASPSPRPTGSGS). N87 carries N-linked (GlcNAc...) asparagine glycosylation. The span at 93–118 (SSASKSTPLPSSSSASPSPRPTGSGS) shows a compositional bias: low complexity. The tract at residues 93-121 (SSASKSTPLPSSSSASPSPRPTGSGSFAK) is disordered. The tract at residues 119-463 (FAKADGLQFS…MDHMENVNKN (345 aa)) is catalytic. Substrate-binding residues include W171 and N285. The active-site Proton donor/acceptor is the E286. Y361 is a binding site for substrate. Catalysis depends on E395, which acts as the Nucleophile. W424 contacts substrate.

It belongs to the glycosyl hydrolase 5 (cellulase A) family.

It localises to the secreted. The catalysed reaction is Random hydrolysis of (1-&gt;4)-beta-D-mannosidic linkages in mannans, galactomannans and glucomannans.. Functionally, endo-1,4-mannanase, a crucial enzyme for depolymerization of seed galactomannans and wood galactoglucomannans. The protein is Probable mannan endo-1,4-beta-mannosidase F (manF) of Aspergillus oryzae (strain ATCC 42149 / RIB 40) (Yellow koji mold).